Here is a 438-residue protein sequence, read N- to C-terminus: Battenin (438 aa).

A disordered region spans residues 1–25 (MGGCAGSRRRLSDSEGEETVPEPRL). Over 1 to 37 (MGGCAGSRRRLSDSEGEETVPEPRLPLLDHQGAHWKN) the chain is Cytoplasmic. Serine 12 and serine 14 each carry phosphoserine. A helical membrane pass occupies residues 38-58 (AVGFWLLGLCNNFSYVVMLSA). Residues 59–127 (AHDILSHERT…GLHLLPYSPR (69 aa)) lie on the Lumenal side of the membrane. N-linked (GlcNAc...) asparagine glycosylation is found at asparagine 71 and asparagine 85. The chain crosses the membrane as a helical span at residues 128-148 (VLVSGICAAGSFVLVAFSHSV). The Cytoplasmic segment spans residues 149–151 (GTS). Residues 152-172 (LCGVVLASISSGLGEVTFLSL) traverse the membrane as a helical segment. Residues 173-182 (TAFYPRAVIS) lie on the Lumenal side of the membrane. The helical transmembrane segment at 183-203 (WWSSGTGGAGLLGALSYLGLT) threads the bilayer. Topologically, residues 204 to 277 (QAGLSPQQTL…SLSLRERWTV (74 aa)) are cytoplasmic. Positions 237 to 268 (QDPGGEEEAESSARQPLIRTEAPESKPGSSSS) are disordered. A Lysosomal targeting motif motif is present at residues 242–244 (EEE). The Lysosomal targeting motif. Required for AP1G1, AP2A2 and AP3D1 interaction signature appears at 253–254 (LI). The chain crosses the membrane as a helical span at residues 278 to 298 (FKGLLWYIVPLVVVYFAEYFI). Topologically, residues 299-346 (NQGLFELLFFRNTSLSHAQQYRWYQMLYQAGVFASRSSLRCCHIRFTW) are lumenal. Asparagine 310 carries N-linked (GlcNAc...) asparagine glycosylation. The chain crosses the membrane as a helical span at residues 347 to 367 (ALALLQCLNLAFLLADVWFGF). At 368 to 438 (LLSIYFVFLI…PLHDFLCQLS (71 aa)) the chain is on the cytoplasmic side. The Lysosomal targeting motif motif lies at 409 to 419 (MATTCISDTLG). Cysteine 435 is subject to Cysteine methyl ester. A lipid anchor (S-farnesyl cysteine) is attached at cysteine 435. Positions 436–438 (QLS) are cleaved as a propeptide — removed in mature form.

The protein belongs to the battenin family. Interacts with DCTN1, KIF3A, RAB7A and RILP. Interacts with CLN5. Post-translationally, highly glycosylated. In terms of processing, farnesylation is important for trafficking to lysosomes.

It is found in the lysosome membrane. The protein localises to the late endosome. It localises to the lysosome. Functionally, mediates microtubule-dependent, anterograde transport connecting the Golgi network, endosomes, autophagosomes, lysosomes and plasma membrane, and participates in several cellular processes such as regulation of lysosomal pH, lysosome protein degradation, receptor-mediated endocytosis, autophagy, transport of proteins and lipids from the TGN, apoptosis and synaptic transmission. Facilitates the proteins transport from trans-Golgi network (TGN)-to other membrane compartments such as transport of microdomain-associated proteins to the plasma membrane, IGF2R transport to the lysosome where it regulates the CTSD release leading to regulation of CTSD maturation and thereby APP intracellular processing. Moreover regulates CTSD activity in response to osmotic stress. Also binds galactosylceramide and transports it from the trans Golgi to the rafts, which may have immediate and downstream effects on cell survival by modulating ceramide synthesis. At the plasma membrane, regulates actin-dependent events including filopodia formation, cell migration, and pinocytosis through ARF1-CDC42 pathway and also the cytoskeleton organization through interaction with MYH10 and fodrin leading to the regulation of the plasma membrane association of Na+, K+ ATPase complex. Regulates synaptic transmission in the amygdala, hippocampus, and cerebellum through regulation of synaptic vesicles density and their proximity to active zones leading to modulation of short-term plasticity and age-dependent anxious behavior, learning and memory. Regulates autophagic vacuoles (AVs) maturation by modulating the trafficking between endocytic and autophagolysosomal/lysosomal compartments, which involves vesicle fusion leading to regulation of degradation process. Also participates in cellular homeostasis of compounds such as, water, ions, amino acids, proteins and lipids in several tissue namely in brain and kidney through regulation of their transport and synthesis. In Macaca fascicularis (Crab-eating macaque), this protein is Battenin.